The chain runs to 651 residues: Acetyl-coenzyme A synthetase (651 aa).

Residues 189-192, threonine 311, and asparagine 335 each bind CoA; that span reads RGGK. ATP contacts are provided by residues 387–389, 411–416, aspartate 500, and arginine 515; these read GEP and DTWWQT. Serine 523 serves as a coordination point for CoA. An ATP-binding site is contributed by arginine 526. Mg(2+) contacts are provided by valine 537, histidine 539, and valine 542. Arginine 584 is a CoA binding site. The residue at position 609 (lysine 609) is an N6-acetyllysine.

It belongs to the ATP-dependent AMP-binding enzyme family. The cofactor is Mg(2+). Acetylated. Deacetylation by the SIR2-homolog deacetylase activates the enzyme.

It catalyses the reaction acetate + ATP + CoA = acetyl-CoA + AMP + diphosphate. Catalyzes the conversion of acetate into acetyl-CoA (AcCoA), an essential intermediate at the junction of anabolic and catabolic pathways. AcsA undergoes a two-step reaction. In the first half reaction, AcsA combines acetate with ATP to form acetyl-adenylate (AcAMP) intermediate. In the second half reaction, it can then transfer the acetyl group from AcAMP to the sulfhydryl group of CoA, forming the product AcCoA. The polypeptide is Acetyl-coenzyme A synthetase (Rhizobium etli (strain CIAT 652)).